Reading from the N-terminus, the 802-residue chain is Mitogen-activated protein kinase kinase kinase 20 (802 aa).

An N-acetylserine modification is found at Ser-2. A phosphoserine mark is found at Ser-2, Ser-3, and Ser-7. The Protein kinase domain occupies 16-277 (LQFFENCGGG…NLPDQCNSFL (262 aa)). ATP contacts are provided by residues 22-30 (CGGGSFGSV) and Lys-45. The active-site Proton acceptor is the Asp-133. Phosphothreonine; by autocatalysis is present on Thr-161. The residue at position 165 (Ser-165) is a Phosphoserine; by autocatalysis. A phosphoserine mark is found at Ser-275 and Ser-302. The interval 287–308 (IEATLERLKKLERDLSFKEQEL) is leucine-zipper. One can recognise an SAM domain in the interval 339–410 (WTEDDVYFWV…KSAIEKLTHD (72 aa)). Phosphoserine occurs at positions 434, 453, and 567. Thr-586 is subject to Phosphothreonine. Ser-587, Ser-593, and Ser-599 each carry phosphoserine. Residues 624 to 642 (YQQITPSINPSRSSSPTQY) are compositionally biased toward polar residues. Residues 624–802 (YQQITPSINP…RGNYRGRRNF (179 aa)) form a disordered region. Residue Thr-628 is modified to Phosphothreonine. A phosphoserine mark is found at Ser-634, Ser-638, Ser-649, Ser-650, and Ser-661. Residues 643 to 666 (GLSRNFSSLNLSSRDSGFSSLNDS) show a composition bias toward low complexity. The span at 667–678 (SSERGRYSDRSR) shows a compositional bias: basic and acidic residues. Positions 670-713 (RGRYSDRSRNKYYRGSVSLNSSPKGRYGGKSQHSTPSRERYSGK) are sensing domain (S). Phosphoserine is present on residues Ser-685, Ser-720, Ser-727, and Ser-733. Residues 728–741 (PDFKRSPNDHDRRV) show a composition bias toward basic and acidic residues. Thr-744 is subject to Phosphothreonine. The C-terminal domain (CTD) stretch occupies residues 776–802 (RKKTHRQLSAKTSKERTRGNYRGRRNF).

It belongs to the protein kinase superfamily. STE Ser/Thr protein kinase family. MAP kinase kinase kinase subfamily. As to quaternary structure, homodimer. Interacts with ZNF33A. Component of a signaling complex containing at least AKAP13, PKN1, MAPK14, MAP3K20 and MAP2K3. Within this complex, AKAP13 interacts directly with PKN1, which in turn recruits MAPK14, MAP2K3 and MAP3K20. Interacts with EIF2AK4/GCN2; promoting EIF2AK4/GCN2 kinase activity. In terms of assembly, interacts with isoform ZAKbeta. Interacts with isoform ZAKalpha. Requires Mg(2+) as cofactor. In terms of processing, activated by phosphorylation by PKN1, followed by autophosphorylation on Thr-161 and Ser-165. Autophosphorylation in response to ribotoxic stress promotes dissociation from colliding ribosomes and activation.

The protein resides in the cytoplasm. Its subcellular location is the nucleus. The enzyme catalyses L-seryl-[protein] + ATP = O-phospho-L-seryl-[protein] + ADP + H(+). It carries out the reaction L-threonyl-[protein] + ATP = O-phospho-L-threonyl-[protein] + ADP + H(+). Its activity is regulated as follows. Activated in response to stress, such as ribosomal stress, osmotic shock and ionizing radiation. Activated by phosphorylation by PKN1, followed by autophosphorylation on Thr-161 and Ser-165. Stress-activated component of a protein kinase signal transduction cascade that promotes programmed cell death in response to various stress, such as ribosomal stress, osmotic shock and ionizing radiation. Acts by catalyzing phosphorylation of MAP kinase kinases, leading to activation of the JNK (MAPK8/JNK1, MAPK9/JNK2 and/or MAPK10/JNK3) and MAP kinase p38 (MAPK11, MAPK12, MAPK13 and/or MAPK14) pathways. Activates JNK through phosphorylation of MAP2K4/MKK4 and MAP2K7/MKK7, and MAP kinase p38 gamma (MAPK12) via phosphorylation of MAP2K3/MKK3 and MAP2K6/MKK6. Involved in stress associated with adrenergic stimulation: contributes to cardiac decompensation during periods of acute cardiac stress. May be involved in regulation of S and G2 cell cycle checkpoint by mediating phosphorylation of CHEK2. Functionally, key component of the stress-activated protein kinase signaling cascade in response to ribotoxic stress or UV-B irradiation. Acts as the proximal sensor of ribosome collisions during the ribotoxic stress response (RSR). Directly binds to the ribosome by inserting its flexible C-terminus into the ribosomal intersubunit space, thereby acting as a sentinel for colliding ribosomes. Upon ribosome collisions, activates either the stress-activated protein kinase signal transduction cascade or the integrated stress response (ISR), leading to programmed cell death or cell survival, respectively. Dangerous levels of ribosome collisions trigger the autophosphorylation and activation of MAP3K20, which dissociates from colliding ribosomes and phosphorylates MAP kinase kinases, leading to activation of the JNK and MAP kinase p38 pathways that promote programmed cell death. Less dangerous levels of ribosome collisions trigger the integrated stress response (ISR): MAP3K20 activates EIF2AK4/GCN2 independently of its protein-kinase activity, promoting EIF2AK4/GCN2-mediated phosphorylation of EIF2S1/eIF-2-alpha. Also acts as a histone kinase by phosphorylating histone H3 at 'Ser-28' (H3S28ph). In terms of biological role, isoform that lacks the C-terminal region that mediates ribosome-binding: does not act as a sensor of ribosome collisions in response to ribotoxic stress. May act as an antagonist of isoform ZAKalpha: interacts with isoform ZAKalpha, leading to decrease the expression of isoform ZAKalpha. In Mus musculus (Mouse), this protein is Mitogen-activated protein kinase kinase kinase 20.